The primary structure comprises 265 residues: Urease accessory protein UreH (265 aa).

This sequence belongs to the UreD family. In terms of assembly, ureH, UreF and UreG form a complex that acts as a GTP-hydrolysis-dependent molecular chaperone, activating the urease apoprotein by helping to assemble the nickel containing metallocenter of UreC. The UreE protein probably delivers the nickel.

The protein resides in the cytoplasm. Its function is as follows. Required for maturation of urease via the functional incorporation of the urease nickel metallocenter. The protein is Urease accessory protein UreH of Helicobacter pylori (strain G27).